The chain runs to 507 residues: Keratin, type II cuticular Hb5 (507 aa).

The segment at 1-123 (MSCRSYRISP…PNAQCVKYEE (123 aa)) is head. The region spanning 123-434 (EKEQIKCLNS…RLLEGEEQRL (312 aa)) is the IF rod domain. A coil 1A region spans residues 124 to 158 (KEQIKCLNSKFAAFIDKVRFLEQQNKLLETKWQFY). Residues 159–168 (QNRKCCESNL) are linker 1. Positions 169–269 (EPLFGGYIEA…YEEEVCVLQA (101 aa)) are coil 1B. Residue K229 forms a Glycyl lysine isopeptide (Lys-Gly) (interchain with G-Cter in SUMO1) linkage. Positions 270 to 286 (HISDTSVIVKMDNSRDL) are linker 12. Positions 287-430 (NMDCVVAEIK…ATYRRLLEGE (144 aa)) are coil 2. The tail stretch occupies residues 431–507 (EQRLCEGVGS…CGSSRSVRFA (77 aa)).

The protein belongs to the intermediate filament family. Heterotetramer of two type I and two type II keratins.

The protein is Keratin, type II cuticular Hb5 (Krt85) of Mus musculus (Mouse).